Reading from the N-terminus, the 347-residue chain is A-type ATP synthase subunit C (347 aa).

The protein belongs to the V-ATPase V0D/AC39 subunit family. In terms of assembly, has multiple subunits with at least A(3), B(3), C, D, E, F, H, I and proteolipid K(x).

It localises to the cell membrane. In terms of biological role, component of the A-type ATP synthase that produces ATP from ADP in the presence of a proton gradient across the membrane. In Haloquadratum walsbyi (strain DSM 16790 / HBSQ001), this protein is A-type ATP synthase subunit C.